The chain runs to 470 residues: Putative multidrug resistance protein MdtD (470 aa).

At 1–11 the chain is on the periplasmic side; the sequence is MTELPDNTRWQ. A helical membrane pass occupies residues 12 to 32; that stretch reads LWIVAFGFFMQSLDTTIVNTA. At 33-48 the chain is on the cytoplasmic side; the sequence is LPSMAKSLGESPLHMH. A helical transmembrane segment spans residues 49–69; that stretch reads MVVVSYVLTVAVMLPASGWLA. At 70 to 76 the chain is on the periplasmic side; sequence DKIGVRN. Residues 77 to 97 form a helical membrane-spanning segment; it reads IFFAAIVLFTLGSLFCALSGT. The Cytoplasmic segment spans residues 98–101; it reads LNQL. A helical transmembrane segment spans residues 102–124; the sequence is VLARVLQGVGGAMMVPVGRLTVM. Residues 125 to 137 lie on the Periplasmic side of the membrane; it reads KIVPRAQYMAAMT. The chain crosses the membrane as a helical span at residues 138 to 158; sequence FVTLPGQIGPLLGPALGGVLV. At 159 to 164 the chain is on the cytoplasmic side; the sequence is EYASWH. The helical transmembrane segment at 165 to 185 threads the bilayer; the sequence is WIFLINIPVGIVGAMATFMLM. The Periplasmic portion of the chain corresponds to 186–196; that stretch reads PNYTIETRRFD. Residues 197 to 217 form a helical membrane-spanning segment; sequence LPGFLLLAIGMAVLTLALDGS. The Cytoplasmic segment spans residues 218–224; that stretch reads KSMGISP. Residues 225–245 form a helical membrane-spanning segment; that stretch reads WTLAGLAAGGAAAILLYLFHA. The Periplasmic portion of the chain corresponds to 246-262; the sequence is KKNSGALFSLRLFRTPT. The chain crosses the membrane as a helical span at residues 263-283; it reads FSLGLLGSFAGRIGSGMLPFM. Over 284-285 the chain is Cytoplasmic; sequence TP. Residues 286 to 306 form a helical membrane-spanning segment; it reads VFLQIGLGFSPFHAGLMMIPM. Over 307 to 341 the chain is Periplasmic; the sequence is VLGSMGMKRIVVQIVNRFGYRRVLVATTLGLALVS. Residues 342–362 traverse the membrane as a helical segment; sequence LLFMSVALLGWYYLLPLVLLL. Residues 363–395 lie on the Cytoplasmic side of the membrane; sequence QGMVNSARFSSMNTLTLKDLPDTLASSGNSLLS. A helical transmembrane segment spans residues 396 to 416; sequence MIMQLSMSIGVTIAGMLLGMF. Residues 417–430 lie on the Periplasmic side of the membrane; sequence GQQHIGIDSSATHH. The chain crosses the membrane as a helical span at residues 431–451; that stretch reads VFMYTWLCMAVIIALPAIIFA. At 452–470 the chain is on the cytoplasmic side; that stretch reads RVPNDTQQNMVISRRKRSL.

Belongs to the major facilitator superfamily. TCR/Tet family.

The protein resides in the cell inner membrane. This is Putative multidrug resistance protein MdtD from Salmonella agona (strain SL483).